We begin with the raw amino-acid sequence, 519 residues long: Methionine--tRNA ligase (519 aa).

The short motif at 11–21 (AYPNAAPHVGH) is the 'HIGH' region element. The 'KMSKS' region motif lies at 299-303 (KMSKS). Position 302 (Lys-302) interacts with ATP. Residues 500-519 (LPPPTGVFPRYQPPQPPEGK) are disordered.

This sequence belongs to the class-I aminoacyl-tRNA synthetase family. MetG type 2B subfamily. Monomer.

It localises to the cytoplasm. It catalyses the reaction tRNA(Met) + L-methionine + ATP = L-methionyl-tRNA(Met) + AMP + diphosphate. Is required not only for elongation of protein synthesis but also for the initiation of all mRNA translation through initiator tRNA(fMet) aminoacylation. The polypeptide is Methionine--tRNA ligase (metG) (Mycobacterium tuberculosis (strain CDC 1551 / Oshkosh)).